The primary structure comprises 463 residues: Lariat debranching enzyme (463 aa).

Residues Cys-8, His-10, Asp-33, and Asn-78 each coordinate a divalent metal cation. The lariat recognition loop stretch occupies residues 118-148 (SGIYSAMDYKKGRYEGLPYNYKMLKSIYHTR). A divalent metal cation contacts are provided by His-168, His-220, and His-222. Positions 250 to 324 (SGFSMKGLNE…QVTKFLALDK (75 aa)) are disordered. The span at 256 to 267 (GLNEPSQERLPV) shows a compositional bias: polar residues. 2 stretches are compositionally biased toward basic and acidic residues: residues 276–289 (DEEGSNNEQEEKQD) and 299–323 (CRKESCKKEPSLSSSDQVTKFLALD).

It belongs to the lariat debranching enzyme family. The cofactor is Fe(2+). Zn(2+) serves as cofactor. It depends on Mn(2+) as a cofactor.

It is found in the nucleus. The protein localises to the cytoplasm. Active in presence of diverse metals including Fe(2+), Zn(2+) and Mn(2+). Binds two metal cations in two adjacent alpha and beta metal-binding pockets. Its function is as follows. Cleaves the 2'-5' phosphodiester linkage at the branch point of lariat intron pre-mRNAs after splicing and converts them into linear molecules that are subsequently degraded, thereby facilitating ribonucleotide turnover. This is Lariat debranching enzyme (dbr1) from Schizosaccharomyces pombe (strain 972 / ATCC 24843) (Fission yeast).